The chain runs to 660 residues: Pentatricopeptide repeat-containing protein At4g20090 (660 aa).

15 PPR repeats span residues 76–110, 111–141, 147–181, 186–220, 221–255, 256–290, 291–325, 326–360, 361–395, 396–430, 431–465, 466–500, 501–535, 539–573, and 574–609; these read GDST…NRVI, IERS…MVDE, SVKS…NMNM, NGLS…KCLP, DGYT…GCSP, SPVI…GCVP, NEVT…KCIP, NDVT…GYHL, NQHI…GCKP, NIVV…GCLP, NAYT…GCSR, NKFC…GIKP, DTVA…EEPK, DVVT…GCDP, and DVIT…LLKR.

It belongs to the PPR family. P subfamily.

May play a role in embryogenesis. The sequence is that of Pentatricopeptide repeat-containing protein At4g20090 (EMB1025) from Arabidopsis thaliana (Mouse-ear cress).